The chain runs to 328 residues: B3 domain-containing protein At5g60140 (328 aa).

A DNA-binding region (TF-B3) is located at residues 13–109 (SKFFKPYLPS…FFNFSIFDHE (97 aa)). Positions 145–221 (LNSDDSDDSD…EDEDDLEDED (77 aa)) are disordered. 2 stretches are compositionally biased toward acidic residues: residues 148–182 (DDSD…AEDG) and 190–221 (GLED…EDED).

Its subcellular location is the nucleus. The sequence is that of B3 domain-containing protein At5g60140 from Arabidopsis thaliana (Mouse-ear cress).